The primary structure comprises 207 residues: MARYIGPKAKLSRREGTDLFLKSARRSLADKCKLDSKPGQHGRISGARTSDYGTQLREKQKVKRIYGVLERQFRRYFAEADRRKGNTGETLLQLLESRLDNVVYRMGFGSTRAEARQLVSHKAITVNGIVANIPSQQVKAGDVVAIREKAKKQARIVEALSLAEQGGMPSWVAVDAKKFEGTFKQVPERADIAGDINESLIVELYSR.

The S4 RNA-binding domain occupies 97-160 (SRLDNVVYRM…KKQARIVEAL (64 aa)).

Belongs to the universal ribosomal protein uS4 family. Part of the 30S ribosomal subunit. Contacts protein S5. The interaction surface between S4 and S5 is involved in control of translational fidelity.

In terms of biological role, one of the primary rRNA binding proteins, it binds directly to 16S rRNA where it nucleates assembly of the body of the 30S subunit. With S5 and S12 plays an important role in translational accuracy. The sequence is that of Small ribosomal subunit protein uS4 from Burkholderia mallei (strain NCTC 10247).